The sequence spans 474 residues: Sensor protein CreC (474 aa).

Over 1-6 the chain is Periplasmic; the sequence is MRIGMR. Residues 7 to 27 traverse the membrane as a helical segment; the sequence is LLLGYFLLVAVAAWFVLAIFV. Residues 28 to 146 are Cytoplasmic-facing; it reads KEVKPGVRRA…LQNPADPESS (119 aa). The chain crosses the membrane as a helical span at residues 147-167; the sequence is VMYVAAPIMDGSRLIGVLSVG. Over 168–183 the chain is Periplasmic; that stretch reads KPNAAMAPVIKRSERR. Residues 184–204 traverse the membrane as a helical segment; the sequence is ILWASAILLGIALVIGAGMVW. The region spanning 205-255 is the HAMP domain; that stretch reads WINRSIARLTRYADSVTDNKPVPLPDLGSSELRKLAQALESMRVKLEGKNY. Residues 205-474 are Cytoplasmic-facing; the sequence is WINRSIARLT…ASLRLHRHFT (270 aa). The Histidine kinase domain occupies 262–473; that stretch reads ALTHELKSPL…LASLRLHRHF (212 aa). At H265 the chain carries Phosphohistidine; by autocatalysis.

In terms of processing, autophosphorylated.

It localises to the cell inner membrane. It carries out the reaction ATP + protein L-histidine = ADP + protein N-phospho-L-histidine.. Its function is as follows. Member of the two-component regulatory system CreC/CreB involved in catabolic regulation. CreC may function as a membrane-associated protein kinase that phosphorylates CreB in response to environmental signals. CreC can also phosphorylate PhoB. The polypeptide is Sensor protein CreC (creC) (Escherichia coli (strain K12)).